Consider the following 271-residue polypeptide: Replication-associated protein A (271 aa).

Residues 11–114 (LHRNANTFLT…PLAVFERGTF (104 aa)) form the CRESS-DNA virus Rep endonuclease domain. Positions 18–21 (FLTY) match the RCR-1 motif. E52, H60, and H62 together coordinate a divalent metal cation. Residues 60–62 (HLH) carry the RCR-2 motif. Residue Y100 is the For DNA cleavage activity of the active site. The short motif at 100–103 (YILK) is the RCR-3 element. E104 is an a divalent metal cation binding site. An oligomerization region spans residues 174–186 (SANKLFPDIQEEF). Residues 197-201 (LLCNE) form a binding to RBR1 region. The interval 220–229 (MLLQPTCYTV) is transactivation. Polar residues predominate over residues 244-264 (SQQMKDQESRASTSSVQQGQG). The tract at residues 244–271 (SQQMKDQESRASTSSVQQGQGNLLGPEV) is disordered.

This sequence belongs to the geminiviridae Rep protein family. Homooligomer. Interacts with host retinoblastoma-related protein 1 (RBR1), and may thereby deregulate the host cell cycle. Part of the C- and V-complexes which are RepA-Rep-DNA complexes involved in the c-sense and v-sense transcription. It depends on Mg(2+) as a cofactor. The cofactor is Mn(2+).

The protein resides in the host nucleus. The protein localises to the host cytoplasm. Its function is as follows. Implicated in enhancement of V-sense gene expression. Acts a an inhibitor of C-sense gene transcription. This chain is Replication-associated protein A, found in Avena sativa (Oat).